Consider the following 110-residue polypeptide: uncharacterized protein (110 aa).

The chain crosses the membrane as a helical span at residues 88-108 (LTRICLLIFGIGLVVLIFLKL).

It is found in the membrane. This is an uncharacterized protein from Rickettsia prowazekii (strain Madrid E).